The primary structure comprises 367 residues: Aminomethyltransferase (367 aa).

Belongs to the GcvT family. The glycine cleavage system is composed of four proteins: P, T, L and H.

It carries out the reaction N(6)-[(R)-S(8)-aminomethyldihydrolipoyl]-L-lysyl-[protein] + (6S)-5,6,7,8-tetrahydrofolate = N(6)-[(R)-dihydrolipoyl]-L-lysyl-[protein] + (6R)-5,10-methylene-5,6,7,8-tetrahydrofolate + NH4(+). The glycine cleavage system catalyzes the degradation of glycine. This chain is Aminomethyltransferase, found in Mycobacterium bovis (strain ATCC BAA-935 / AF2122/97).